The primary structure comprises 188 residues: Elongation factor P (188 aa).

It belongs to the elongation factor P family.

The protein localises to the cytoplasm. The protein operates within protein biosynthesis; polypeptide chain elongation. Functionally, involved in peptide bond synthesis. Stimulates efficient translation and peptide-bond synthesis on native or reconstituted 70S ribosomes in vitro. Probably functions indirectly by altering the affinity of the ribosome for aminoacyl-tRNA, thus increasing their reactivity as acceptors for peptidyl transferase. The protein is Elongation factor P of Wolbachia pipientis wMel.